The chain runs to 769 residues: Probable protease Ga0334635_1659 (769 aa).

The interval 118–167 is disordered; that stretch reads VARGSSDNNGAPPLSFTLSHGDPKSDPEPSSPSRLVNTGLSEAERPESPL.

Probably a dedicated protease for substrate gasdermin bGSDM; cleaves the bGSDM precursor, releasing the pore-forming moiety, which integrates into the membrane and triggers cell death. Involved in defense against bacteriophages. Expression of gasdermin bGSDM and this neighboring protease is toxic in E.coli. The protein is Probable protease Ga0334635_1659 of Vitiosangium sp. (strain GDMCC 1.1324).